Consider the following 509-residue polypeptide: MEAILSFAGIGINYKKLQSKLQHDFGRFLKALTITARALPGQPKHIAIRQETAFTLQGEYIYFPILLRKQFEMFNIVYTAHPVSLRTLPCVETEFPLFNYQQEMVDKIHKKLLPPYGRFYLHLNTGLGKTRIAISIIQKLLYPTLVIVPTKAIQIQWIDELTLLLPHLRVAAYNNAACKKKDITSKEYDVIVGIINTLRKKPEAFFEPFGLVVLDEAHELHSPENYKIFWKIQLSRILGLSATPLDRPDGMDKIIIHHLGQPQRTVSPTTTFSGYVREIEYQGHPDFVKPVCINEKVSAIATIDKLLQDPSRIQLVVNETKRLYSLHTAEPQKWGTNEPYGIIIFVEFRKLLEIFYQALSKEFKDVEIIVPEVALLCGGVSNTALSQAHSASIILLTYGYGRRGISFKHMTSIIMATPRRNNMEQILGRITRQGSDEKKVRIVVDIKDTLSPLSSQVYDRHRIYKKKGYPIFKCSASYQQPYSSNEVLIWDPYNESCLASTTTPPSPSK.

The Helicase ATP-binding domain maps to 110–262 (KKLLPPYGRF…KIIIHHLGQP (153 aa)). 123-130 (LNTGLGKT) lines the ATP pocket. The DEAH box signature appears at 215-218 (DEAH).

It belongs to the DEAD box helicase family. DEAH subfamily.

The catalysed reaction is ATP + H2O = ADP + phosphate + H(+). In African swine fever virus (isolate Tick/Malawi/Lil 20-1/1983) (ASFV), this protein is Putative ATP-dependent RNA helicase QP509L.